Reading from the N-terminus, the 1173-residue chain is Clustered mitochondria protein homolog (1173 aa).

Positions 1–21 (MSTIDLPTSSLPGSSGDPSGT) are enriched in low complexity. Residues 1–25 (MSTIDLPTSSLPGSSGDPSGTEMSH) form a disordered region. One can recognise a Clu domain in the interval 316 to 565 (VPHRADLSRT…SLFPLDAQFL (250 aa)). The interval 888 to 910 (KFTGKKGNKKKRNLGKSQNTTNR) is disordered. The span at 890–901 (TGKKGNKKKRNL) shows a compositional bias: basic residues. A TPR repeat occupies 984–1017 (ARAYCQLAMIYHQLEKKEEAVELARKAVIVCERF).

Belongs to the CLU family. As to quaternary structure, may associate with the eukaryotic translation initiation factor 3 (eIF-3) complex.

It localises to the cytoplasm. In terms of biological role, mRNA-binding protein involved in proper cytoplasmic distribution of mitochondria. The polypeptide is Clustered mitochondria protein homolog (Schizosaccharomyces pombe (strain 972 / ATCC 24843) (Fission yeast)).